Here is a 146-residue protein sequence, read N- to C-terminus: Ribosome maturation factor RimP (146 aa).

The protein belongs to the RimP family.

It localises to the cytoplasm. In terms of biological role, required for maturation of 30S ribosomal subunits. The protein is Ribosome maturation factor RimP of Helicobacter pylori (strain J99 / ATCC 700824) (Campylobacter pylori J99).